A 481-amino-acid polypeptide reads, in one-letter code: Amino acid permease 6 (481 aa).

Over 1-36 (MEKKKSMFVEQSFPEHEIGDTNKNFDEDGRDKRTGT) the chain is Cytoplasmic. Helical transmembrane passes span 37 to 57 (WMTG…LSLA) and 58 to 78 (WAIA…FSFI). Topologically, residues 79-125 (TYFTSTMLADCYRSPDPVTGKRNYTYMEVVRSYLGGRKVQLCGLAQY) are cytoplasmic. Residues 126 to 146 (GNLIGITIGYTITASISMVAV) traverse the membrane as a helical segment. At 147–167 (KRSNCFHKNGHNVKCATSNTP) the chain is on the extracellular side. Residues 168–188 (FMIIFAIIQIILSQIPNFHNL) form a helical membrane-spanning segment. The Cytoplasmic segment spans residues 189 to 190 (SW). A helical transmembrane segment spans residues 191–211 (LSILAAVMSFCYASIGVGLSI). Residues 212 to 242 (AKAAGGGEHVRTTLTGVTVGIDVSGAEKIWR) lie on the Extracellular side of the membrane. Residues 243–263 (TFQAIGDIAFAYAYSTVLIEI) form a helical membrane-spanning segment. Topologically, residues 264 to 283 (QDTLKAGPPSENKAMKRASL) are cytoplasmic. A helical transmembrane segment spans residues 284 to 304 (VGVSTTTFFYMLCGCVGYAAF). Residues 305-321 (GNDAPGNFLTGFGFYEP) lie on the Extracellular side of the membrane. A helical transmembrane segment spans residues 322 to 342 (FWLIDFANVCIAVHLIGAYQV). Residues 343 to 385 (FCQPIFQFVESQSAKRWPDNKFITGEYKIHVPCCGDFSINFLR) lie on the Cytoplasmic side of the membrane. A helical membrane pass occupies residues 386–405 (LVWRTSYVVVTAVVAMIFPF). Residues 406-408 (FND) are Extracellular-facing. A helical transmembrane segment spans residues 409 to 427 (FLGLIGAASFWPLTVYFPI). Residues 428-447 (EMHIAQKKIPKFSFTWTWLK) lie on the Cytoplasmic side of the membrane. The helical transmembrane segment at 448–468 (ILSWTCFIVSLVAAAGSVQGL) threads the bilayer. The Extracellular segment spans residues 469–481 (IQSLKDFKPFQAP).

It belongs to the amino acid/polyamine transporter 2 family. Amino acid/auxin permease (AAAP) (TC 2.A.18.2) subfamily. As to expression, expressed in roots and leaves, and at lower levels in stems and flowers. Found in the xylem parenchyma.

Its subcellular location is the cell membrane. Functionally, amino acid-proton symporter. Stereospecific transporter with a broad specificity for tryptophan, proline, and neutral and acidic amino acids. Has an affinity for aspartate in a physiological range. Involved in the uptake of amino acids diffusing out of the xylem tracheids into the xylem parenchyma. The protein is Amino acid permease 6 (AAP6) of Arabidopsis thaliana (Mouse-ear cress).